Reading from the N-terminus, the 118-residue chain is Large ribosomal subunit protein uL18 (118 aa).

This sequence belongs to the universal ribosomal protein uL18 family. In terms of assembly, part of the 50S ribosomal subunit; part of the 5S rRNA/L5/L18/L25 subcomplex. Contacts the 5S and 23S rRNAs.

In terms of biological role, this is one of the proteins that bind and probably mediate the attachment of the 5S RNA into the large ribosomal subunit, where it forms part of the central protuberance. This is Large ribosomal subunit protein uL18 from Myxococcus xanthus (strain DK1622).